Consider the following 458-residue polypeptide: MSITKEFDTITAISTPLGEGAIGIVRLSGTDALAIAQSVFKGKNLEQVASHTINYGHIIDPKTGTIIDEVMVSVMLAPKTFTRENVVEINTHGGIAVTNEILQLLIRQGARMAEPGEFTKRAFLNGRVDLTQAEAVMDIIRAKTDKAMTIAVKQLDGSLSQLINDTRQEILNTLAQVEVNIDYPEYDDVEEMTTALLREKTQEFQSLLENLLRTAKRGKILREGLSTAIIGRPNVGKSSLLNNLLREDKAIVTDIAGTTRDVIEEYVNIKGVPLKLVDTAGIRETDDLVEQIGVERSKKALQEADLVLLVLNASEKLTDQDRALLNLSQDSNRIILLNKTDLEQKIELEQLPADLIPISVLTNQNINLIEDRINQLFFDNAGLVEQDATYLSNARHISLIEKAVQSLEAVNDGLALGMPVDLLQVDLTRTWEILGEITGDAAPDELITQLFSQFCLGK.

(6S)-5-formyl-5,6,7,8-tetrahydrofolate-binding residues include arginine 26, glutamate 88, and arginine 127. The TrmE-type G domain occupies 224–378 (GLSTAIIGRP…IEDRINQLFF (155 aa)). Asparagine 234 contacts K(+). GTP contacts are provided by residues 234–239 (NVGKSS), 253–259 (TDIAGTT), and 278–281 (DTAG). Serine 238 lines the Mg(2+) pocket. Threonine 253, isoleucine 255, and threonine 258 together coordinate K(+). Threonine 259 serves as a coordination point for Mg(2+). Lysine 458 lines the (6S)-5-formyl-5,6,7,8-tetrahydrofolate pocket.

Belongs to the TRAFAC class TrmE-Era-EngA-EngB-Septin-like GTPase superfamily. TrmE GTPase family. In terms of assembly, homodimer. Heterotetramer of two MnmE and two MnmG subunits. The cofactor is K(+).

The protein localises to the cytoplasm. In terms of biological role, exhibits a very high intrinsic GTPase hydrolysis rate. Involved in the addition of a carboxymethylaminomethyl (cmnm) group at the wobble position (U34) of certain tRNAs, forming tRNA-cmnm(5)s(2)U34. The sequence is that of tRNA modification GTPase MnmE from Streptococcus pyogenes serotype M12 (strain MGAS9429).